The following is a 638-amino-acid chain: Intron-encoded RNA maturase bI4 (638 aa).

Residues 1-253 (MAFRKSNVYL…VFYSPNTLGQ (253 aa)) are COB exons 1 to 4 encoded. Residues 253–638 (QNMALLLITY…LKFNEKWNNN (386 aa)) form a COB intron 4 encoded region.

It in the C-terminal section; belongs to the LAGLIDADG endonuclease family. In terms of assembly, forms a ternary complex with intron derived RNA and the imported mitochondrial leucyl-tRNA synthetase NAM2. The proteins do not interact directly with each other. In terms of processing, the mature protein may arise from proteolytic cleavage of an in-frame translation of COB exons 1 to 4 plus intron 4, containing the bI4 open reading frame. Cleavage would take place close to the Met-385 resulting in an active maturase of about 30 kDa.

The protein localises to the mitochondrion. Mitochondrial mRNA maturase required for splicing of intron 4 of the cytochrome b (COB) gene, containing its own coding sequence, and intron 4 in COX1, coding for the related homing endonuclease aI4. In vivo splicing requires in addition the imported mitochondrial leucyl-tRNA synthetase NAM2. Both proteins seem to stimulate the intrinsic ribozyme activity of intron bI4 through binding to and stabilizing specific secondary and tertiary structure elements in the RNA. This Saccharomyces cerevisiae (strain ATCC 204508 / S288c) (Baker's yeast) protein is Intron-encoded RNA maturase bI4 (BI4).